The following is a 447-amino-acid chain: Adenylosuccinate synthetase (447 aa).

Residues 12–18 (GDEGKGK) and 40–42 (GHT) each bind GTP. Catalysis depends on Asp-13, which acts as the Proton acceptor. The Mg(2+) site is built by Asp-13 and Gly-40. IMP contacts are provided by residues 13–16 (DEGK), 38–41 (NAGH), Thr-128, Arg-142, Gln-223, Thr-238, and Arg-302. His-41 (proton donor) is an active-site residue. 298–304 (TTTGRKR) contacts substrate. Residues Arg-304, 330 to 332 (KLD), and 412 to 414 (SLG) each bind GTP.

Belongs to the adenylosuccinate synthetase family. Homodimer. The cofactor is Mg(2+).

It localises to the cytoplasm. The enzyme catalyses IMP + L-aspartate + GTP = N(6)-(1,2-dicarboxyethyl)-AMP + GDP + phosphate + 2 H(+). Its pathway is purine metabolism; AMP biosynthesis via de novo pathway; AMP from IMP: step 1/2. In terms of biological role, plays an important role in the de novo pathway of purine nucleotide biosynthesis. Catalyzes the first committed step in the biosynthesis of AMP from IMP. The protein is Adenylosuccinate synthetase of Nostoc punctiforme (strain ATCC 29133 / PCC 73102).